We begin with the raw amino-acid sequence, 502 residues long: UDP-N-acetylmuramoylalanine--D-glutamate ligase (502 aa).

136–142 (GTNGKTT) contacts ATP.

The protein belongs to the MurCDEF family.

It localises to the cytoplasm. It carries out the reaction UDP-N-acetyl-alpha-D-muramoyl-L-alanine + D-glutamate + ATP = UDP-N-acetyl-alpha-D-muramoyl-L-alanyl-D-glutamate + ADP + phosphate + H(+). It functions in the pathway cell wall biogenesis; peptidoglycan biosynthesis. Cell wall formation. Catalyzes the addition of glutamate to the nucleotide precursor UDP-N-acetylmuramoyl-L-alanine (UMA). The protein is UDP-N-acetylmuramoylalanine--D-glutamate ligase of Corynebacterium jeikeium (strain K411).